Here is a 100-residue protein sequence, read N- to C-terminus: ATP-dependent Clp protease adapter protein ClpS (100 aa).

Belongs to the ClpS family. In terms of assembly, binds to the N-terminal domain of the chaperone ClpA.

Its function is as follows. Involved in the modulation of the specificity of the ClpAP-mediated ATP-dependent protein degradation. The protein is ATP-dependent Clp protease adapter protein ClpS of Neisseria meningitidis serogroup B (strain ATCC BAA-335 / MC58).